Reading from the N-terminus, the 236-residue chain is Large ribosomal subunit protein uL1 (236 aa).

This sequence belongs to the universal ribosomal protein uL1 family. In terms of assembly, part of the 50S ribosomal subunit.

Binds directly to 23S rRNA. The L1 stalk is quite mobile in the ribosome, and is involved in E site tRNA release. Its function is as follows. Protein L1 is also a translational repressor protein, it controls the translation of the L11 operon by binding to its mRNA. The polypeptide is Large ribosomal subunit protein uL1 (Heliobacterium modesticaldum (strain ATCC 51547 / Ice1)).